Reading from the N-terminus, the 409-residue chain is Cuticle-degrading serine protease (409 aa).

The N-terminal stretch at 1–21 (MLTNGLISLLAIAGLATNAFA) is a signal peptide. A propeptide spanning residues 22–123 (GPIRKVSNAG…VEQDTVVTTY (102 aa)) is cleaved from the precursor. The region spanning 39 to 122 (KYIVVLKKGL…YVEQDTVVTT (84 aa)) is the Inhibitor I9 domain. One can recognise a Peptidase S8 domain in the interval 130–409 (TWGLDRISHE…PNKIAYNGYA (280 aa)). The active-site Charge relay system is the D164. N-linked (GlcNAc...) asparagine glycosylation occurs at N178. The active-site Charge relay system is the H200. A glycan (N-linked (GlcNAc...) asparagine) is linked at N252. The active-site Charge relay system is S353.

This sequence belongs to the peptidase S8 family.

The protein resides in the secreted. With respect to regulation, inhibited by PMSF, SSI, the peptide Phe-Val and by Phe, but not by EDTA. Its function is as follows. Hydrolyzes gelatin, casein, the chromogenic substrate azocoll and the cuticle of the nematode P.redivivus. Immobilizes P.redivivus. This is Cuticle-degrading serine protease from Arthrobotrys oligospora (strain ATCC 24927 / CBS 115.81 / DSM 1491) (Nematode-trapping fungus).